The primary structure comprises 342 residues: Ferredoxin--NADP reductase (342 aa).

FAD is bound by residues Cys-17, Asp-36, Gln-44, Tyr-49, Ile-89, Phe-124, Asp-289, and Thr-330.

It belongs to the ferredoxin--NADP reductase type 2 family. Homodimer. Requires FAD as cofactor.

It carries out the reaction 2 reduced [2Fe-2S]-[ferredoxin] + NADP(+) + H(+) = 2 oxidized [2Fe-2S]-[ferredoxin] + NADPH. The sequence is that of Ferredoxin--NADP reductase from Rhodopseudomonas palustris (strain BisA53).